Here is a 433-residue protein sequence, read N- to C-terminus: tRNA(Ile2) 2-agmatinylcytidine synthetase TiaS (433 aa).

It belongs to the TiaS family.

It localises to the cytoplasm. The catalysed reaction is cytidine(34) in tRNA(Ile2) + agmatine + ATP + H2O = 2-agmatinylcytidine(34) in tRNA(Ile2) + AMP + 2 phosphate + 2 H(+). ATP-dependent agmatine transferase that catalyzes the formation of 2-agmatinylcytidine (agm2C) at the wobble position (C34) of tRNA(Ile2), converting the codon specificity from AUG to AUA. This chain is tRNA(Ile2) 2-agmatinylcytidine synthetase TiaS, found in Methanopyrus kandleri (strain AV19 / DSM 6324 / JCM 9639 / NBRC 100938).